Consider the following 434-residue polypeptide: Histidinol dehydrogenase (434 aa).

NAD(+)-binding residues include Tyr-130, Gln-191, and Asn-214. 3 residues coordinate substrate: Ser-237, Gln-259, and His-262. Zn(2+) is bound by residues Gln-259 and His-262. Catalysis depends on proton acceptor residues Glu-327 and His-328. His-328, Asp-361, Glu-415, and His-420 together coordinate substrate. A Zn(2+)-binding site is contributed by Asp-361. His-420 contributes to the Zn(2+) binding site.

This sequence belongs to the histidinol dehydrogenase family. The cofactor is Zn(2+).

It carries out the reaction L-histidinol + 2 NAD(+) + H2O = L-histidine + 2 NADH + 3 H(+). Its pathway is amino-acid biosynthesis; L-histidine biosynthesis; L-histidine from 5-phospho-alpha-D-ribose 1-diphosphate: step 9/9. Catalyzes the sequential NAD-dependent oxidations of L-histidinol to L-histidinaldehyde and then to L-histidine. This Cereibacter sphaeroides (strain ATCC 17023 / DSM 158 / JCM 6121 / CCUG 31486 / LMG 2827 / NBRC 12203 / NCIMB 8253 / ATH 2.4.1.) (Rhodobacter sphaeroides) protein is Histidinol dehydrogenase.